The following is a 390-amino-acid chain: GTPase Obg (390 aa).

The region spanning 1–159 (MKFIDEALIR…RDLQLELMLL (159 aa)) is the Obg domain. Residues 160–333 (ADVGMLGLPN…LCRDIMDFIE (174 aa)) form the OBG-type G domain. GTP-binding positions include 166–173 (GLPNAGKS), 191–195 (FTTLV), 213–216 (DIPG), 283–286 (NKID), and 314–316 (SAV). Mg(2+) contacts are provided by Ser-173 and Thr-193. The interval 363-390 (DHQFEDEDEDWDDWSEEDEEGVETIYKP) is disordered. A compositionally biased stretch (acidic residues) spans 366–384 (FEDEDEDWDDWSEEDEEGV).

This sequence belongs to the TRAFAC class OBG-HflX-like GTPase superfamily. OBG GTPase family. As to quaternary structure, monomer. It depends on Mg(2+) as a cofactor.

It is found in the cytoplasm. Its function is as follows. An essential GTPase which binds GTP, GDP and possibly (p)ppGpp with moderate affinity, with high nucleotide exchange rates and a fairly low GTP hydrolysis rate. Plays a role in control of the cell cycle, stress response, ribosome biogenesis and in those bacteria that undergo differentiation, in morphogenesis control. The chain is GTPase Obg from Pasteurella multocida (strain Pm70).